The sequence spans 42 residues: Photosystem I reaction center subunit IX (42 aa).

A helical membrane pass occupies residues 7 to 27 (YLSVAPVLSTLWFGSLAGLLI).

Belongs to the PsaJ family.

The protein resides in the plastid. It is found in the chloroplast thylakoid membrane. In terms of biological role, may help in the organization of the PsaE and PsaF subunits. This is Photosystem I reaction center subunit IX from Lepidium virginicum (Virginia pepperweed).